Here is a 121-residue protein sequence, read N- to C-terminus: UPF0295 protein ABC1323 (121 aa).

2 helical membrane passes run threonine 14 to lysine 34 and valine 41 to isoleucine 61.

This sequence belongs to the UPF0295 family.

The protein localises to the cell membrane. The chain is UPF0295 protein ABC1323 from Shouchella clausii (strain KSM-K16) (Alkalihalobacillus clausii).